Here is a 758-residue protein sequence, read N- to C-terminus: Matrix metalloproteinase-2 (758 aa).

Residues 1-17 form the signal peptide; that stretch reads MFSKYVLATLLALFAQS. Histidine 257 contributes to the Zn(2+) binding site. The active site involves glutamate 258. 2 residues coordinate Zn(2+): histidine 261 and histidine 267. The interval 335-514 is disordered; the sequence is AYWPWNNPSN…HNKPRKPKPD (180 aa). Residues 338–348 show a composition bias toward low complexity; that stretch reads PWNNPSNNPNN. The segment covering 349-476 has biased composition (basic and acidic residues); sequence DRNRARERQE…EWERRNRNGA (128 aa). Over residues 479–494 the composition is skewed to low complexity; sequence PVTPTANTTPRPTNKP. Over residues 499–510 the composition is skewed to basic residues; the sequence is HRQHHHHNKPRK. Hemopexin repeat units follow at residues 513–561, 565–610, 612–659, and 660–707; these read PDSC…WSAL, LTKV…GLPP, LTHI…WSGV, and GYNI…WMQC. A disulfide bond links cysteine 516 and cysteine 707. The helical transmembrane segment at 739–756 threads the bilayer; the sequence is LRINHFILSILLLAIANW. Residues 757-758 are Cytoplasmic-facing; sequence RS.

The protein belongs to the peptidase M10A family. It depends on Ca(2+) as a cofactor. The cofactor is Zn(2+). Widely expressed during embryogenesis including in the mesoderm, developing gut, central and peripheral nervous systems and imaginal disks. In the embryonic nervous system, expressed in neurons and glia. In third instar larvae, strongly expressed in the morphogenetic furrow of eye imaginal disks and in the optic lobe region of the brain. Expressed in posterior follicle cells in all mature stage 14 follicles but not in earlier follicles and is also expressed in some anterior follicle cells that help form dorsal eggshell structures.

The protein resides in the cell membrane. Its function is as follows. Has metalloproteinase activity. Proteolytically cleaves the PGRP-LC receptor; involved in gut-fat body innate immunological communication (GFIC)-mediated activation of the imd/Relish signal transduction pathway. Required for larval tissue histolysis during metamorphosis and is involved in pupal head eversion and fusion of the wing imaginal tissue. Required for growth of the dorsal air sac primordium and development of the dorsal air sacs. Promotes embryonic motor axon fasciculation. Cleaves and activates frac to promote motor axon bundling during outgrowth. Promotes the reshaping of adult sensory neuron dendrites from a radial to lattice-like shape which occurs after eclosion by degrading the basement membrane on which the dendrites grow. Involved in inhibition of follicle stem cell proliferation by cleaving Dlp, inhibiting its interaction with wg and preventing Dlp-mediated spreading of wg to follicle stem cells to enhance their proliferation. Plays a role in wound healing. Involved in fat body dissociation which occurs during metamorphosis by degrading basement membrane components, leading to destruction of cell-basement membrane junctions. Required for posterior follicle cell degradation and ovulation. The sequence is that of Matrix metalloproteinase-2 from Drosophila melanogaster (Fruit fly).